A 46-amino-acid polypeptide reads, in one-letter code: Photosystem II reaction center protein K (46 aa).

Residues 1–9 constitute a propeptide that is removed on maturation; that stretch reads MSTLPILLA. Residues 25-45 traverse the membrane as a helical segment; that stretch reads LPSIPVLFLLLAFVWQAAVSF.

The protein belongs to the PsbK family. PSII is composed of 1 copy each of membrane proteins PsbA, PsbB, PsbC, PsbD, PsbE, PsbF, PsbH, PsbI, PsbJ, PsbK, PsbL, PsbM, PsbT, PsbX, PsbY, PsbZ, Psb30/Ycf12, at least 3 peripheral proteins of the oxygen-evolving complex and a large number of cofactors. It forms dimeric complexes.

The protein localises to the plastid. It is found in the chloroplast thylakoid membrane. Its function is as follows. One of the components of the core complex of photosystem II (PSII). PSII is a light-driven water:plastoquinone oxidoreductase that uses light energy to abstract electrons from H(2)O, generating O(2) and a proton gradient subsequently used for ATP formation. It consists of a core antenna complex that captures photons, and an electron transfer chain that converts photonic excitation into a charge separation. This Nephroselmis olivacea (Green alga) protein is Photosystem II reaction center protein K.